A 249-amino-acid polypeptide reads, in one-letter code: MSDEQTTHFGYEKVDVKDKARRVAGVFHSVAAKYDIMNDVMSGGIHRIWKQFTIELSGVRSGHKVLDIAGGTGDLTKKFSRIVGPTGQVVLADINESMLNVGRDKLIDSGVAGNVVYTQADAQYLPFPDNTFDCITIAFGLRNVTDKDLAIASMLRVLKPGGRLLILEFTKPQNALVEKAYDFYSFKILPTMGQIIAQDADSYRYLAESIRMHPDQETLKGMMDAAGFAQTKYHNMTGGIVALHTGIKP.

Residues Thr-72, Asp-93, and 121-122 contribute to the S-adenosyl-L-methionine site; that span reads DA.

It belongs to the class I-like SAM-binding methyltransferase superfamily. MenG/UbiE family.

The enzyme catalyses a 2-demethylmenaquinol + S-adenosyl-L-methionine = a menaquinol + S-adenosyl-L-homocysteine + H(+). It carries out the reaction a 2-methoxy-6-(all-trans-polyprenyl)benzene-1,4-diol + S-adenosyl-L-methionine = a 5-methoxy-2-methyl-3-(all-trans-polyprenyl)benzene-1,4-diol + S-adenosyl-L-homocysteine + H(+). The protein operates within quinol/quinone metabolism; menaquinone biosynthesis; menaquinol from 1,4-dihydroxy-2-naphthoate: step 2/2. Its pathway is cofactor biosynthesis; ubiquinone biosynthesis. Methyltransferase required for the conversion of demethylmenaquinol (DMKH2) to menaquinol (MKH2) and the conversion of 2-polyprenyl-6-methoxy-1,4-benzoquinol (DDMQH2) to 2-polyprenyl-3-methyl-6-methoxy-1,4-benzoquinol (DMQH2). The sequence is that of Ubiquinone/menaquinone biosynthesis C-methyltransferase UbiE from Saccharophagus degradans (strain 2-40 / ATCC 43961 / DSM 17024).